A 309-amino-acid chain; its full sequence is Putative S-adenosyl-L-methionine-dependent methyltransferase Mflv_0743 (309 aa).

Residues Asp-134 and 163 to 164 contribute to the S-adenosyl-L-methionine site; that span reads DL.

This sequence belongs to the UPF0677 family.

In terms of biological role, exhibits S-adenosyl-L-methionine-dependent methyltransferase activity. The sequence is that of Putative S-adenosyl-L-methionine-dependent methyltransferase Mflv_0743 from Mycolicibacterium gilvum (strain PYR-GCK) (Mycobacterium gilvum (strain PYR-GCK)).